Here is a 339-residue protein sequence, read N- to C-terminus: DNA-directed RNA polymerase subunit alpha (339 aa).

An alpha N-terminal domain (alpha-NTD) region spans residues 1–235; sequence MVREEVAVST…DLFIPFLHGE (235 aa). Positions 267-339 are alpha C-terminal domain (alpha-CTD); that stretch reads KAIALECIFI…FTIDLPKNKF (73 aa).

It belongs to the RNA polymerase alpha chain family. In terms of assembly, in plastids the minimal PEP RNA polymerase catalytic core is composed of four subunits: alpha, beta, beta', and beta''. When a (nuclear-encoded) sigma factor is associated with the core the holoenzyme is formed, which can initiate transcription.

It is found in the plastid. The protein resides in the chloroplast. It catalyses the reaction RNA(n) + a ribonucleoside 5'-triphosphate = RNA(n+1) + diphosphate. DNA-dependent RNA polymerase catalyzes the transcription of DNA into RNA using the four ribonucleoside triphosphates as substrates. In Drimys granadensis, this protein is DNA-directed RNA polymerase subunit alpha.